The following is a 767-amino-acid chain: Protein ROLLING AND ERECT LEAF 2 (767 aa).

3 disordered regions span residues 1-20, 78-187, and 201-309; these read MGCTASKVEQEDTVRRCKER, PALA…SEFF, and RELE…SSTV. 2 stretches are compositionally biased toward pro residues: residues 81 to 90 and 110 to 126; these read APTPTPPPPS and APPPPPPTQSHQPPPPV. The span at 145–155 shows a compositional bias: low complexity; sequence SDSSVASPARS. Basic and acidic residues predominate over residues 201-210; it reads RELEEEEKAR. Positions 221–232 are enriched in acidic residues; the sequence is EDEVDDDDDERE. Positions 255 to 264 are enriched in basic and acidic residues; the sequence is TRSEEGEMGN.

In terms of tissue distribution, highly expressed in young leaves and panicles. Expressed at low levels in roots.

Its subcellular location is the cell membrane. Functionally, involved in the regulation of leaf shape formation. May function by coordinating the expression of genes associated with leaf and bulliform cell development. This Oryza sativa subsp. japonica (Rice) protein is Protein ROLLING AND ERECT LEAF 2.